A 286-amino-acid polypeptide reads, in one-letter code: MKQFIVLTVVLLAIQELQGGSVVTVDDKCTCKDTLNTLTKGQLIDRLVLCNQRNDNLEKIIDGLKKENNILRKENDGLRAENCQLSEALKREKEARQKAEKALKECQKNTENLKETIEQLKKELAEAQKALEKCKKELADCKKENAKLLNKIEELNCTITQLQEKLERCRGRERDLQCQLDECKKKLNICNNELIACRKQQEELRCKIERLNTEIEKLRKQNAACEKDLNTLRCETSEFLAIATQRQSQLTSIIQRAEGESSAIKASYIGFRNSHDLTCAPCAGPA.

A signal peptide spans 1-19 (MKQFIVLTVVLLAIQELQG). Positions 61-235 (IDGLKKENNI…EKDLNTLRCE (175 aa)) are helical. Asn-156 carries an N-linked (GlcNAc...) asparagine glycan.

In Bradysia coprophila (Dark-winged fungus gnat), this protein is Puff II/9-2 protein (II/9-2).